A 186-amino-acid chain; its full sequence is Ribosome-recycling factor (186 aa).

The disordered stretch occupies residues aspartate 135–lysine 156.

The protein belongs to the RRF family.

It localises to the cytoplasm. Its function is as follows. Responsible for the release of ribosomes from messenger RNA at the termination of protein biosynthesis. May increase the efficiency of translation by recycling ribosomes from one round of translation to another. The chain is Ribosome-recycling factor from Bdellovibrio bacteriovorus (strain ATCC 15356 / DSM 50701 / NCIMB 9529 / HD100).